A 388-amino-acid polypeptide reads, in one-letter code: Putative membrane protein MJ1562 (388 aa).

The next 6 membrane-spanning stretches (helical) occupy residues 22–42 (FLML…ATNV), 219–239 (SQSF…IIYF), 246–266 (IMPL…MGLL), 273–293 (ATAG…IHLM), 320–340 (AVMA…LAPL), and 351–371 (ALGI…LIVI).

It belongs to the resistance-nodulation-cell division (RND) (TC 2.A.6) family. MmpL subfamily.

The protein localises to the cell membrane. In Methanocaldococcus jannaschii (strain ATCC 43067 / DSM 2661 / JAL-1 / JCM 10045 / NBRC 100440) (Methanococcus jannaschii), this protein is Putative membrane protein MJ1562.